The chain runs to 302 residues: Glycine--tRNA ligase alpha subunit (302 aa).

Belongs to the class-II aminoacyl-tRNA synthetase family. In terms of assembly, tetramer of two alpha and two beta subunits.

It is found in the cytoplasm. The catalysed reaction is tRNA(Gly) + glycine + ATP = glycyl-tRNA(Gly) + AMP + diphosphate. This is Glycine--tRNA ligase alpha subunit from Xanthomonas axonopodis pv. citri (strain 306).